Reading from the N-terminus, the 28-residue chain is Caerulein precursor fragment B1 (28 aa).

Belongs to the gastrin/cholecystokinin family. Expressed by the skin glands.

It is found in the secreted. Its function is as follows. Peptide CPF-B1: Has antimicrobial activity against Gram-negative bacteria E.coli ATCC 25922 (MIC=5 uM) and multidrug-resistant A.baumannii (MIC=4-8 uM), against Gram-positive bacteria S.aureus ATCC 25923 (MIC=5 uM) and methicillin-resistant S.aureus and against fungus C.albicans ATCC 90028 (MIC=25 uM). Has some hemolytic activity against human erythrocytes at high concentrations. In Xenopus borealis (Kenyan clawed frog), this protein is Caerulein precursor fragment B1.